The primary structure comprises 256 residues: Ubiquinone/menaquinone biosynthesis C-methyltransferase UbiE (256 aa).

Residues Thr-79, Asp-100, and 128–129 each bind S-adenosyl-L-methionine; that span reads DA.

Belongs to the class I-like SAM-binding methyltransferase superfamily. MenG/UbiE family.

The enzyme catalyses a 2-demethylmenaquinol + S-adenosyl-L-methionine = a menaquinol + S-adenosyl-L-homocysteine + H(+). It carries out the reaction a 2-methoxy-6-(all-trans-polyprenyl)benzene-1,4-diol + S-adenosyl-L-methionine = a 5-methoxy-2-methyl-3-(all-trans-polyprenyl)benzene-1,4-diol + S-adenosyl-L-homocysteine + H(+). Its pathway is quinol/quinone metabolism; menaquinone biosynthesis; menaquinol from 1,4-dihydroxy-2-naphthoate: step 2/2. It participates in cofactor biosynthesis; ubiquinone biosynthesis. In terms of biological role, methyltransferase required for the conversion of demethylmenaquinol (DMKH2) to menaquinol (MKH2) and the conversion of 2-polyprenyl-6-methoxy-1,4-benzoquinol (DDMQH2) to 2-polyprenyl-3-methyl-6-methoxy-1,4-benzoquinol (DMQH2). In Pseudomonas fluorescens (strain SBW25), this protein is Ubiquinone/menaquinone biosynthesis C-methyltransferase UbiE.